The following is a 522-amino-acid chain: Peptide chain release factor 3 (522 aa).

One can recognise a tr-type G domain in the interval 10-277; it reads ASRKTFAIIS…TFVDFAPSPS (268 aa). GTP contacts are provided by residues 19–26, 87–91, and 141–144; these read SHPDAGKT, DTPGH, and NKMD.

It belongs to the TRAFAC class translation factor GTPase superfamily. Classic translation factor GTPase family. PrfC subfamily.

The protein localises to the cytoplasm. Functionally, increases the formation of ribosomal termination complexes and stimulates activities of RF-1 and RF-2. It binds guanine nucleotides and has strong preference for UGA stop codons. It may interact directly with the ribosome. The stimulation of RF-1 and RF-2 is significantly reduced by GTP and GDP, but not by GMP. In Listeria monocytogenes serotype 4b (strain F2365), this protein is Peptide chain release factor 3.